A 135-amino-acid chain; its full sequence is Insoluble matrix shell protein 5 (135 aa).

Residues 1 to 16 (MILVVTLACLIAVVCC) form the signal peptide. EF-hand domains lie at 21-56 (TDQG…ADLN) and 93-128 (IEFV…TVRP). 10 residues coordinate Ca(2+): D34, D36, N38, K40, E45, D106, N108, D110, E112, and E117.

Component of the acid-insoluble organic matrix of the calcified shell.

The protein localises to the secreted. The sequence is that of Insoluble matrix shell protein 5 from Ruditapes philippinarum (Japanese carpet shell).